A 125-amino-acid chain; its full sequence is Ribosome-binding factor A (125 aa).

Belongs to the RbfA family. In terms of assembly, monomer. Binds 30S ribosomal subunits, but not 50S ribosomal subunits or 70S ribosomes.

The protein resides in the cytoplasm. In terms of biological role, one of several proteins that assist in the late maturation steps of the functional core of the 30S ribosomal subunit. Associates with free 30S ribosomal subunits (but not with 30S subunits that are part of 70S ribosomes or polysomes). Required for efficient processing of 16S rRNA. May interact with the 5'-terminal helix region of 16S rRNA. This chain is Ribosome-binding factor A, found in Thermosipho melanesiensis (strain DSM 12029 / CIP 104789 / BI429).